A 296-amino-acid chain; its full sequence is Co-chaperone protein DjlA (296 aa).

Topologically, residues 1–15 (MNLRDFFVITTWWGK) are periplasmic. The helical transmembrane segment at 16–39 (ILGAFFGYLTAGPVGALFGILVGN) threads the bilayer. Over 40-296 (FFDRGLVSYY…YELICETKGW (257 aa)) the chain is Cytoplasmic. A disordered region spans residues 200–225 (QHYHNQQEYKHTSSSQGQQGYKPQSP). Residues 211–221 (TSSSQGQQGYK) are compositionally biased toward polar residues. Positions 231–296 (HAFALLEVSP…YELICETKGW (66 aa)) constitute a J domain.

As to quaternary structure, homodimer.

It is found in the cell inner membrane. Regulatory DnaK co-chaperone. Direct interaction between DnaK and DjlA is needed for the induction of the wcaABCDE operon, involved in the synthesis of a colanic acid polysaccharide capsule, possibly through activation of the RcsB/RcsC phosphotransfer signaling pathway. The colanic acid capsule may help the bacterium survive conditions outside the host. This Legionella pneumophila subsp. pneumophila (strain Philadelphia 1 / ATCC 33152 / DSM 7513) protein is Co-chaperone protein DjlA.